The following is a 224-amino-acid chain: Cytidylate kinase (224 aa).

An ATP-binding site is contributed by 11–19; the sequence is GPAAAGKST.

The protein belongs to the cytidylate kinase family. Type 1 subfamily.

The protein localises to the cytoplasm. The enzyme catalyses CMP + ATP = CDP + ADP. The catalysed reaction is dCMP + ATP = dCDP + ADP. This is Cytidylate kinase from Geobacillus kaustophilus (strain HTA426).